The sequence spans 304 residues: Cell surface-binding protein OPG105 (304 aa).

The Alpha-carbonic anhydrase domain occupies 1-235 (MPQQLSPINI…NDDTQVYYSG (235 aa)). Residues 1-275 (MPQQLSPINI…YQKYIEGNKT (275 aa)) lie on the Virion surface side of the membrane. Residues 276 to 294 (FAIIAIVFVFILTAILFLM) traverse the membrane as a helical segment. Residues 295 to 304 (SRRYSREKQN) are Intravirion-facing.

This sequence belongs to the alpha-carbonic anhydrase family. In terms of assembly, homodimer; disulfide-linked. Apparently non-glycosylated.

It is found in the virion membrane. In terms of biological role, binds to chondroitin sulfate on the cell surface to provide virion attachment to target cell. The sequence is that of Cell surface-binding protein OPG105 (OPG105) from Rabbitpox virus (strain Utrecht) (RPV).